The chain runs to 98 residues: uncharacterized protein (98 aa).

This is an uncharacterized protein from Human cytomegalovirus (strain AD169) (HHV-5).